Here is a 371-residue protein sequence, read N- to C-terminus: 3-dehydroquinate synthase (371 aa).

Residues 72-77 (DGEEHK), 106-110 (GVVGD), 130-131 (TT), K143, K152, and 170-173 (TLKT) contribute to the NAD(+) site. Positions 185, 248, and 265 each coordinate Zn(2+).

This sequence belongs to the sugar phosphate cyclases superfamily. Dehydroquinate synthase family. It depends on Co(2+) as a cofactor. Zn(2+) is required as a cofactor. NAD(+) serves as cofactor.

The protein resides in the cytoplasm. The catalysed reaction is 7-phospho-2-dehydro-3-deoxy-D-arabino-heptonate = 3-dehydroquinate + phosphate. The protein operates within metabolic intermediate biosynthesis; chorismate biosynthesis; chorismate from D-erythrose 4-phosphate and phosphoenolpyruvate: step 2/7. Functionally, catalyzes the conversion of 3-deoxy-D-arabino-heptulosonate 7-phosphate (DAHP) to dehydroquinate (DHQ). This chain is 3-dehydroquinate synthase, found in Pelotomaculum thermopropionicum (strain DSM 13744 / JCM 10971 / SI).